A 573-amino-acid polypeptide reads, in one-letter code: LysM domain-containing protein ARB_01155/01156 (573 aa).

The N-terminal stretch at Met-1–Ala-18 is a signal peptide. N-linked (GlcNAc...) asparagine glycosylation is found at Asn-46, Asn-71, and Asn-283. Positions Arg-373–Val-419 constitute a LysM domain. Positions Tyr-375–Asp-405 are lysM domain.

It is found in the secreted. Might have a role in sequestration of chitin oligosaccharides (breakdown products of fungal cell walls that are released during invasion and act as triggers of host immunity) to dampen host defense. The chain is LysM domain-containing protein ARB_01155/01156 from Arthroderma benhamiae (strain ATCC MYA-4681 / CBS 112371) (Trichophyton mentagrophytes).